Consider the following 322-residue polypeptide: Cytochrome c biogenesis protein CcsA (322 aa).

8 helical membrane-spanning segments follow: residues 19–39, 43–63, 72–92, 104–124, 150–170, 230–250, 264–281, and 291–311; these read NAIFCNLLLTMCLYWFSLIIV, LICNLAKFSAVNSNVILFFYL, FFPLSNLYESLMFLSCLLLFI, VIGALVLPLIVLVQGFASLSL, MMLSYATLLLGSLFSILYLVL, TIGIGFPFLTMGIISGAVWAN, TWALITWLIFASYLHARL, and AFLGSFGFFIVWVCYLGVNFL.

Belongs to the CcmF/CycK/Ccl1/NrfE/CcsA family. In terms of assembly, may interact with Ccs1.

The protein resides in the plastid. It is found in the chloroplast thylakoid membrane. Functionally, required during biogenesis of c-type cytochromes (cytochrome c6 and cytochrome f) at the step of heme attachment. In Heterosigma akashiwo (strain NIES-293 / 8280G21-1), this protein is Cytochrome c biogenesis protein CcsA.